The chain runs to 272 residues: MAEQIRVAIAGAGGRMGRQLIAAAAAIPGVTLGAALEREGSGLLGCDAGELAGCGVTGVTVESSLERVAGQFDILIDFTRPEGTMAHLAFCQAHGKAMVIGTTGFSEQEKATIEAASQHVAIVLAANFSVGVNVMLRLLEKAAQVMGSYCDIEILEAHHRHKVDAPSGTALAMGEAIAGALGRSLESCAVYTRLGHTGERAPGSIGFATLRAGDIVGEHTAMFADVGERLEITHKASSRMTFASGAMRAAQWLGAQQPGMYDMCDVLALDTL.

Residues 11-16 (GAGGRM) and E37 each bind NAD(+). R38 is a binding site for NADP(+). NAD(+)-binding positions include 101-103 (GTT) and 125-128 (AANF). H158 functions as the Proton donor/acceptor in the catalytic mechanism. H159 is a binding site for (S)-2,3,4,5-tetrahydrodipicolinate. K162 serves as the catalytic Proton donor. Residue 168 to 169 (GT) participates in (S)-2,3,4,5-tetrahydrodipicolinate binding.

Belongs to the DapB family. As to quaternary structure, homotetramer.

The protein resides in the cytoplasm. The catalysed reaction is (S)-2,3,4,5-tetrahydrodipicolinate + NAD(+) + H2O = (2S,4S)-4-hydroxy-2,3,4,5-tetrahydrodipicolinate + NADH + H(+). It carries out the reaction (S)-2,3,4,5-tetrahydrodipicolinate + NADP(+) + H2O = (2S,4S)-4-hydroxy-2,3,4,5-tetrahydrodipicolinate + NADPH + H(+). The protein operates within amino-acid biosynthesis; L-lysine biosynthesis via DAP pathway; (S)-tetrahydrodipicolinate from L-aspartate: step 4/4. Functionally, catalyzes the conversion of 4-hydroxy-tetrahydrodipicolinate (HTPA) to tetrahydrodipicolinate. This is 4-hydroxy-tetrahydrodipicolinate reductase from Edwardsiella ictaluri (strain 93-146).